A 339-amino-acid polypeptide reads, in one-letter code: Nicotinate-nucleotide--dimethylbenzimidazole phosphoribosyltransferase (339 aa).

E306 functions as the Proton acceptor in the catalytic mechanism.

It belongs to the CobT family.

It catalyses the reaction 5,6-dimethylbenzimidazole + nicotinate beta-D-ribonucleotide = alpha-ribazole 5'-phosphate + nicotinate + H(+). Its pathway is nucleoside biosynthesis; alpha-ribazole biosynthesis; alpha-ribazole from 5,6-dimethylbenzimidazole: step 1/2. Its function is as follows. Catalyzes the synthesis of alpha-ribazole-5'-phosphate from nicotinate mononucleotide (NAMN) and 5,6-dimethylbenzimidazole (DMB). The sequence is that of Nicotinate-nucleotide--dimethylbenzimidazole phosphoribosyltransferase from Brucella abortus (strain S19).